Reading from the N-terminus, the 931-residue chain is Isoleucine--tRNA ligase (931 aa).

The 'HIGH' region motif lies at 58–68 (PYANGHLHCGH). Glu559 serves as a coordination point for L-isoleucyl-5'-AMP. The 'KMSKS' region signature appears at 600-604 (KLSKS). Lys603 lines the ATP pocket. Positions 894, 897, 914, and 917 each coordinate Zn(2+).

This sequence belongs to the class-I aminoacyl-tRNA synthetase family. IleS type 1 subfamily. As to quaternary structure, monomer. Requires Zn(2+) as cofactor.

The protein resides in the cytoplasm. The enzyme catalyses tRNA(Ile) + L-isoleucine + ATP = L-isoleucyl-tRNA(Ile) + AMP + diphosphate. Functionally, catalyzes the attachment of isoleucine to tRNA(Ile). As IleRS can inadvertently accommodate and process structurally similar amino acids such as valine, to avoid such errors it has two additional distinct tRNA(Ile)-dependent editing activities. One activity is designated as 'pretransfer' editing and involves the hydrolysis of activated Val-AMP. The other activity is designated 'posttransfer' editing and involves deacylation of mischarged Val-tRNA(Ile). The chain is Isoleucine--tRNA ligase from Legionella pneumophila (strain Corby).